A 274-amino-acid polypeptide reads, in one-letter code: Probable WRKY transcription factor 49 (274 aa).

A DNA-binding region (WRKY) is located at residues 108–173 (NSNGMCDDGY…YEGFHFHYTY (66 aa)). Residues 188 to 228 (KTKIHKHNAQDMNKKSQTQEESKEAQLGELTNQNHPVNKAQ) form a disordered region. A coiled-coil region spans residues 193–222 (KHNAQDMNKKSQTQEESKEAQLGELTNQNH). Basic and acidic residues predominate over residues 195-213 (NAQDMNKKSQTQEESKEAQ). The span at 216 to 228 (ELTNQNHPVNKAQ) shows a compositional bias: polar residues.

The protein belongs to the WRKY group II-c family.

It is found in the nucleus. Functionally, transcription factor. Interacts specifically with the W box (5'-(T)TGAC[CT]-3'), a frequently occurring elicitor-responsive cis-acting element. This Arabidopsis thaliana (Mouse-ear cress) protein is Probable WRKY transcription factor 49 (WRKY49).